The primary structure comprises 469 residues: Neuraminidase (469 aa).

Over 1–9 (MNPNQKIIT) the chain is Intravirion. The chain crosses the membrane as a helical span at residues 10–30 (IGSVSLTIATICFLMQIAILV). Residues 11 to 33 (GSVSLTIATICFLMQIAILVTTV) are involved in apical transport and lipid raft association. The Virion surface segment spans residues 31-469 (TTVTLHFKQY…DGADINIMPI (439 aa)). The tract at residues 36-88 (HFKQYECDYPANNQAMPCEPIIIERNITEIVYLTNTTIEKEVCPKLVEYRNWS) is hypervariable stalk region. Residues Asn61, Asn70, and Asn86 are each glycosylated (N-linked (GlcNAc...) asparagine; by host). The tract at residues 91–469 (QCKITGFAPF…DGADINIMPI (379 aa)) is head of neuraminidase. Cystine bridges form between Cys92-Cys417, Cys124-Cys129, Cys183-Cys230, Cys232-Cys237, Cys278-Cys291, Cys280-Cys289, Cys318-Cys337, and Cys421-Cys447. Arg118 is a binding site for substrate. Asn146 carries an N-linked (GlcNAc...) asparagine; by host glycan. The active-site Proton donor/acceptor is the Asp151. Position 152 (Arg152) interacts with substrate. N-linked (GlcNAc...) asparagine; by host glycosylation is found at Asn200 and Asn234. Residue 276–277 (EE) coordinates substrate. Position 292 (Arg292) interacts with substrate. Ca(2+) is bound by residues Asp293 and Gly297. A glycan (N-linked (GlcNAc...) asparagine; by host) is linked at Asn313. Asp324 serves as a coordination point for Ca(2+). Residue Arg371 coordinates substrate. The N-linked (GlcNAc...) asparagine; by host glycan is linked to Asn402. Tyr406 functions as the Nucleophile in the catalytic mechanism.

It belongs to the glycosyl hydrolase 34 family. In terms of assembly, homotetramer. It depends on Ca(2+) as a cofactor. Post-translationally, N-glycosylated.

The protein localises to the virion membrane. Its subcellular location is the host apical cell membrane. The enzyme catalyses Hydrolysis of alpha-(2-&gt;3)-, alpha-(2-&gt;6)-, alpha-(2-&gt;8)- glycosidic linkages of terminal sialic acid residues in oligosaccharides, glycoproteins, glycolipids, colominic acid and synthetic substrates.. With respect to regulation, inhibited by the neuraminidase inhibitors zanamivir (Relenza) and oseltamivir (Tamiflu). These drugs interfere with the release of progeny virus from infected cells and are effective against all influenza strains. Resistance to neuraminidase inhibitors is quite rare. Its function is as follows. Catalyzes the removal of terminal sialic acid residues from viral and cellular glycoconjugates. Cleaves off the terminal sialic acids on the glycosylated HA during virus budding to facilitate virus release. Additionally helps virus spread through the circulation by further removing sialic acids from the cell surface. These cleavages prevent self-aggregation and ensure the efficient spread of the progeny virus from cell to cell. Otherwise, infection would be limited to one round of replication. Described as a receptor-destroying enzyme because it cleaves a terminal sialic acid from the cellular receptors. May facilitate viral invasion of the upper airways by cleaving the sialic acid moieties on the mucin of the airway epithelial cells. Likely to plays a role in the budding process through its association with lipid rafts during intracellular transport. May additionally display a raft-association independent effect on budding. Plays a role in the determination of host range restriction on replication and virulence. Sialidase activity in late endosome/lysosome traffic seems to enhance virus replication. This Aves (whales) protein is Neuraminidase.